The chain runs to 545 residues: MFILNNRKWRKLKRDPSAFFRDSKFNFLRYFSAKKFAKNFKNSSHIHKTNISKAQSNISSTLKQNRKQDMLIPINFFNFEYIVKKLNNQNAIGVYILPSNLTLKPALCILESHKEDFLNKFLLTISSENLKLQYKFNGQIKNPKSVNEIWTDLFSIAHVDMKLSTDRTLSSSISQFWFRLEFCKEDKDFILFPTANRYSRKLWKHSIKNNQLFKEGIRNYSEISSLPYEEDHNFDIDLVFTWVNSEDKNWQELYKKYKPDFNSDATSTSRFLSRDELKFALRSWEMNGSFIRKIFIVSNCAPPAWLDLNNPKIQWVYHEEIMPQSALPTFSSHAIETSLHHIPGISNYFIYSNDDFLLTKPLNKDNFFYSNGIAKLRLEAWGNVNGECTEGEPDYLNGARNANTLLEKEFKKFTTKLHTHSPQSMRTDILFEMEKKYPEEFNRTLHNKFRSLDDIAVTGYLYHHYALLSGRALQSSDKTELVQQNHDFKKKLNNVVTLTKERNFDKLPLSVCINDGADSHLNEEWNVQVIKFLETLFPLPSSFEK.

The protein belongs to the stealth family.

May be the polymerase that links individual UDP-N-acetyl-D-mannosamine monomers. In serotype A the capsule is composed of repeated units of (alpha 1-6)-linked N-acetyl-D-mannosamine-1-phosphate. The protein is Capsular polysaccharide phosphotransferase SacB (sacB) of Neisseria meningitidis serogroup A.